A 431-amino-acid polypeptide reads, in one-letter code: Enolase (431 aa).

Gln-162 lines the (2R)-2-phosphoglycerate pocket. Glu-204 acts as the Proton donor in catalysis. Positions 241, 284, and 311 each coordinate Mg(2+). Positions 336, 365, 366, and 387 each coordinate (2R)-2-phosphoglycerate. The Proton acceptor role is filled by Lys-336.

The protein belongs to the enolase family. It depends on Mg(2+) as a cofactor.

Its subcellular location is the cytoplasm. It localises to the secreted. It is found in the cell surface. It catalyses the reaction (2R)-2-phosphoglycerate = phosphoenolpyruvate + H2O. It functions in the pathway carbohydrate degradation; glycolysis; pyruvate from D-glyceraldehyde 3-phosphate: step 4/5. Functionally, catalyzes the reversible conversion of 2-phosphoglycerate (2-PG) into phosphoenolpyruvate (PEP). It is essential for the degradation of carbohydrates via glycolysis. The polypeptide is Enolase (Sorangium cellulosum (strain So ce56) (Polyangium cellulosum (strain So ce56))).